We begin with the raw amino-acid sequence, 140 residues long: Large ribosomal subunit protein uL14 (140 aa).

The protein belongs to the universal ribosomal protein uL14 family. Part of the 50S ribosomal subunit. Forms a cluster with proteins L3 and L24e, part of which may contact the 16S rRNA in 2 intersubunit bridges.

Its function is as follows. Binds to 23S rRNA. Forms part of two intersubunit bridges in the 70S ribosome. This Aeropyrum pernix (strain ATCC 700893 / DSM 11879 / JCM 9820 / NBRC 100138 / K1) protein is Large ribosomal subunit protein uL14.